The chain runs to 143 residues: Transcriptional regulator MraZ (143 aa).

2 SpoVT-AbrB domains span residues 5–47 and 76–119; these read EYHH…SMEE and AMES…AKER.

This sequence belongs to the MraZ family. As to quaternary structure, forms oligomers.

The protein resides in the cytoplasm. The protein localises to the nucleoid. This Lactobacillus helveticus (strain DPC 4571) protein is Transcriptional regulator MraZ.